The sequence spans 467 residues: Fumarate hydratase class II (467 aa).

Residues Ser99–Thr101, His130–Asp133, Ser140–Asn142, and Thr188 each bind substrate. His189 acts as the Proton donor/acceptor in catalysis. Ser319 is a catalytic residue. Residues Ser320 and Lys325 to Asn327 contribute to the substrate site.

It belongs to the class-II fumarase/aspartase family. Fumarase subfamily. As to quaternary structure, homotetramer.

It localises to the cytoplasm. The enzyme catalyses (S)-malate = fumarate + H2O. Its pathway is carbohydrate metabolism; tricarboxylic acid cycle; (S)-malate from fumarate: step 1/1. In terms of biological role, involved in the TCA cycle. Catalyzes the stereospecific interconversion of fumarate to L-malate. The chain is Fumarate hydratase class II from Thermosynechococcus vestitus (strain NIES-2133 / IAM M-273 / BP-1).